The primary structure comprises 1242 residues: Myosin-16 (1242 aa).

Residues 6–55 form the Myosin N-terminal SH3-like domain; that stretch reads MVDSHVWVEDPERAWIDGVVLNIKGEEAEIKTNDGRDVIANLSRLYPKDT. The 670-residue stretch at 60 to 729 folds into the Myosin motor domain; the sequence is EGVEDMTRLS…QMAELDAHRT (670 aa). ATP is bound by residues 154–161 and 207–215; these read GESGSGKT and NNNSSRFGK. Actin-binding regions lie at residues 493-527, 529-552, 587-610, and 610-632; these read LIEK…YHTF, DHKR…AGDV, FPPL…KLQL, and LQQL…KPNN. IQ domains lie at 732–761, 755–784, 780–809, 803–832, 828–857, and 851–880; these read LGES…ASVN, MRRA…EEAA, REEA…SALT, TKSS…TRAA, TTRA…VSLL, and LKRV…ADRK. Disordered stretches follow at residues 869–893 and 908–1042; these read KQLG…ELSN and EQSD…ERKT. A compositionally biased stretch (basic and acidic residues) spans 876-893; sequence QADRKEETEKERKVELSN. 6 repeat units span residues 876-908, 909-940, 941-965, 966-997, 998-1029, and 1030-1061. The tract at residues 876–1061 is 6 X 33 AA repeats of Q-S-D-D-x-E-E-x(2)-H-x-R-K-x-K-x(2)-I-x(2)-E-D-G-x(3)-S-x-V-x-H-S-x; the sequence is QADRKEETEK…IQKSFVTCSE (186 aa). A compositionally biased stretch (basic and acidic residues) spans 948-966; it reads GHERKTKLSIESEDGHSDQ. The stretch at 1079-1142 forms a coiled coil; the sequence is DTEIESLTAE…QLQDSLNRLL (64 aa). Residues 1175–1242 are disordered; the sequence is DLADSSENSE…DKEGGFEDYF (68 aa). The span at 1179 to 1191 shows a compositional bias: low complexity; sequence SSENSEASSSDSD. Residues 1199-1224 are compositionally biased toward polar residues; that stretch reads PSSDNFSTFNPNQLQVIVQDLSTTEA. Basic and acidic residues predominate over residues 1225–1242; that stretch reads KGTESYDSDKEGGFEDYF.

The protein belongs to the TRAFAC class myosin-kinesin ATPase superfamily. Myosin family. Plant myosin class XI subfamily. In terms of assembly, homodimer. Expressed in flowers and leaves.

It localises to the cytoplasm. Its function is as follows. Myosin heavy chain that is required for the cell cycle-regulated transport of various organelles and proteins for their segregation. Functions by binding with its tail domain to receptor proteins on organelles and exerting force with its N-terminal motor domain against actin filaments, thereby transporting its cargo along polarized actin cables. This Arabidopsis thaliana (Mouse-ear cress) protein is Myosin-16 (XI-J).